Consider the following 97-residue polypeptide: Small cell adhesion glycoprotein (97 aa).

The Extracellular portion of the chain corresponds to 1–36 (MTSLLTTPSPREELMTTPILQPTEALSPEDGASTAL). Thr2 carries O-linked (GalNAc...) threonine glycosylation. Ser3 is a glycosylation site (O-linked (GalNAc...) serine). O-linked (GalNAc...) threonine glycosylation is found at Thr6 and Thr7. O-linked (GalNAc...) serine glycosylation is present at Ser9. O-linked (GalNAc...) threonine glycosylation is found at Thr16, Thr17, and Thr23. The chain crosses the membrane as a helical; Signal-anchor for type III membrane protein span at residues 37-57 (IAVVITVVFLTLLSVVILIFF). Topologically, residues 58–97 (YLYKNKGSYVTYEPTEGEPSAIVQMESDLAKGSEKEEYFI) are cytoplasmic.

It belongs to the SMAGP family. Post-translationally, O-glycosylated. The O-glycan is modified with sialic acid residues. In terms of tissue distribution, detected in breast, endometrium, colon and biliary tract. Detected in polarized epithelial structures characterized by cell-cell adhesion (at protein level).

The protein localises to the cell membrane. It localises to the cytoplasmic vesicle membrane. In terms of biological role, may play a role in epithelial cell-cell contacts. May play a role in tumor invasiveness and metastasis formation. This is Small cell adhesion glycoprotein (SMAGP) from Homo sapiens (Human).